Here is a 309-residue protein sequence, read N- to C-terminus: Zinc-finger homeodomain protein 5 (309 aa).

The segment covering 1–16 has biased composition (basic and acidic residues); the sequence is MDMRSHEMIERRREDN. The segment at 1-21 is disordered; it reads MDMRSHEMIERRREDNGNNNG. The segment at 76–125 adopts a ZF-HD dimerization-type; degenerate zinc-finger fold; that stretch reads YRECLKNHAASVGGSVHDGCGEFMPSGEEGTIEALRCAACDCHRNFHRKE. The homeobox DNA-binding region spans 240-303; it reads KKRFRTKFTT…NNKNNAKKPP (64 aa).

In terms of assembly, homo- and heterodimer with other ZFHD proteins. Interacts with MIF1, MIF2 and MIF3; these interactions prevent nuclear localization and DNA-binding to inhibit transcription regulation activity. Binds to ZHD1, ZHD2, ZHD4, ZHD10 and ZHD11. In terms of tissue distribution, mostly expressed in flowers and inflorescence.

It localises to the nucleus. Its function is as follows. Putative transcription factor. Binds DNA at 5'-ATTA-3' consensus promoter regions. Regulates floral architecture and leaf development. Regulators in the abscisic acid (ABA) signal pathway that confers sensitivity to ABA in an ARF2-dependent manner. The polypeptide is Zinc-finger homeodomain protein 5 (ZHD5) (Arabidopsis thaliana (Mouse-ear cress)).